The primary structure comprises 346 residues: G-protein coupled receptor 42 (346 aa).

Topologically, residues Met1–Ser19 are extracellular. Residues Val20 to Val40 form a helical membrane-spanning segment. Residues Gly41–Pro47 lie on the Cytoplasmic side of the membrane. A helical transmembrane segment spans residues Val48–Leu68. Residues Pro69 to Leu90 are Extracellular-facing. A helical membrane pass occupies residues Ser91–Ile111. At Glu112 to Ala132 the chain is on the cytoplasmic side. A helical transmembrane segment spans residues Gly133–Ile153. Over Glu154 to Leu178 the chain is Extracellular. Asn166 carries an N-linked (GlcNAc...) asparagine glycan. The helical transmembrane segment at Ala179 to Ile199 threads the bilayer. At Thr200–Arg222 the chain is on the cytoplasmic side. A helical membrane pass occupies residues Val223–Val243. Residues Ser244–Arg258 lie on the Extracellular side of the membrane. A helical transmembrane segment spans residues Ile259–Ser279. The Cytoplasmic portion of the chain corresponds to Ser280–Asn346. Over residues Met307–Glu330 the composition is skewed to basic and acidic residues. The tract at residues Met307–Asn346 is disordered.

It belongs to the G-protein coupled receptor 1 family.

The protein localises to the cell membrane. In terms of biological role, g protein-coupled receptor that is activated by short chain fatty acids (SCFAs), such as propionate. Hence may play a role in the regulation of whole-body energy homeostasis and/or in intestinal immunity. The protein is G-protein coupled receptor 42 (GPR42) of Homo sapiens (Human).